Reading from the N-terminus, the 196-residue chain is Large ribosomal subunit protein uL5 (196 aa).

This sequence belongs to the universal ribosomal protein uL5 family. Part of the 50S ribosomal subunit; part of the 5S rRNA/L5/L18/L25 subcomplex. Contacts the 5S rRNA and the P site tRNA. Forms a bridge to the 30S subunit in the 70S ribosome.

In terms of biological role, this is one of the proteins that bind and probably mediate the attachment of the 5S RNA into the large ribosomal subunit, where it forms part of the central protuberance. In the 70S ribosome it contacts protein S13 of the 30S subunit (bridge B1b), connecting the 2 subunits; this bridge is implicated in subunit movement. Contacts the P site tRNA; the 5S rRNA and some of its associated proteins might help stabilize positioning of ribosome-bound tRNAs. In Prosthecochloris aestuarii (strain DSM 271 / SK 413), this protein is Large ribosomal subunit protein uL5.